The primary structure comprises 148 residues: Methylglyoxal synthase (148 aa).

One can recognise an MGS-like domain in the interval 4–148 (VSVPAIKRIV…LSYNTKVKKD (145 aa)). Substrate-binding positions include His-17, Lys-21, 43–46 (TGTT), and 63–64 (SG). The active-site Proton donor/acceptor is Asp-69. His-96 serves as a coordination point for substrate.

Belongs to the methylglyoxal synthase family.

The enzyme catalyses dihydroxyacetone phosphate = methylglyoxal + phosphate. Its function is as follows. Catalyzes the formation of methylglyoxal from dihydroxyacetone phosphate. The polypeptide is Methylglyoxal synthase (Leptospira interrogans serogroup Icterohaemorrhagiae serovar copenhageni (strain Fiocruz L1-130)).